A 95-amino-acid chain; its full sequence is Nodulin (95 aa).

The protein is Nodulin of Striga hermonthica (Purple witchweed).